Here is a 236-residue protein sequence, read N- to C-terminus: uncharacterized protein (236 aa).

The HTH gntR-type domain occupies 7–74 (RTNRRDIYLK…PKIGSFVSRV (68 aa)). The H-T-H motif DNA-binding region spans 34-53 (ENELAASMGVSRTPVRESLI).

This is an uncharacterized protein from Streptomyces ambofaciens.